A 308-amino-acid chain; its full sequence is Endonuclease G, mitochondrial (308 aa).

The active-site Proton acceptor is His-148. Residue Asn-180 coordinates Mg(2+).

The protein belongs to the DNA/RNA non-specific endonuclease family. In terms of assembly, homodimer; disulfide-linked. Interacts with crn-5, crn-4, crn-1 and cyn-13. Mg(2+) serves as cofactor.

It is found in the mitochondrion. Its function is as follows. Endonuclease important for programmed cell death; it mediates apoptotic DNA fragmentation. This Caenorhabditis elegans protein is Endonuclease G, mitochondrial (cps-6).